The primary structure comprises 421 residues: Gamma-glutamyl phosphate reductase (421 aa).

The protein belongs to the gamma-glutamyl phosphate reductase family.

Its subcellular location is the cytoplasm. It catalyses the reaction L-glutamate 5-semialdehyde + phosphate + NADP(+) = L-glutamyl 5-phosphate + NADPH + H(+). Its pathway is amino-acid biosynthesis; L-proline biosynthesis; L-glutamate 5-semialdehyde from L-glutamate: step 2/2. Functionally, catalyzes the NADPH-dependent reduction of L-glutamate 5-phosphate into L-glutamate 5-semialdehyde and phosphate. The product spontaneously undergoes cyclization to form 1-pyrroline-5-carboxylate. The chain is Gamma-glutamyl phosphate reductase from Acinetobacter baumannii (strain SDF).